The primary structure comprises 383 residues: Chaperone protein DnaJ (383 aa).

Positions 5-70 constitute a J domain; sequence DYYKTLGVTQ…KKRTAYDQYG (66 aa). The CR-type zinc finger occupies 137–215; the sequence is GTIKEIKIPT…CHGNGRIEIS (79 aa). 8 residues coordinate Zn(2+): C150, C153, C167, C170, C189, C192, C203, and C206. CXXCXGXG motif repeat units follow at residues 150–157, 167–174, 189–196, and 203–210; these read CPTCYGYG, CPTCRGNG, CPQCHGEG, and CRRCHGNG.

The protein belongs to the DnaJ family. Homodimer. Requires Zn(2+) as cofactor.

Its subcellular location is the cytoplasm. In terms of biological role, participates actively in the response to hyperosmotic and heat shock by preventing the aggregation of stress-denatured proteins and by disaggregating proteins, also in an autonomous, DnaK-independent fashion. Unfolded proteins bind initially to DnaJ; upon interaction with the DnaJ-bound protein, DnaK hydrolyzes its bound ATP, resulting in the formation of a stable complex. GrpE releases ADP from DnaK; ATP binding to DnaK triggers the release of the substrate protein, thus completing the reaction cycle. Several rounds of ATP-dependent interactions between DnaJ, DnaK and GrpE are required for fully efficient folding. Also involved, together with DnaK and GrpE, in the DNA replication of plasmids through activation of initiation proteins. This chain is Chaperone protein DnaJ, found in Buchnera aphidicola subsp. Baizongia pistaciae (strain Bp).